The primary structure comprises 137 residues: Peptide methionine sulfoxide reductase MsrB (137 aa).

The MsrB domain occupies 7 to 129 (AEELKKKLSE…NSASLAFSDE (123 aa)). Cysteine 46, cysteine 49, cysteine 95, and cysteine 98 together coordinate Zn(2+). Cysteine 118 acts as the Nucleophile in catalysis.

Belongs to the MsrB Met sulfoxide reductase family. Zn(2+) serves as cofactor.

The enzyme catalyses L-methionyl-[protein] + [thioredoxin]-disulfide + H2O = L-methionyl-(R)-S-oxide-[protein] + [thioredoxin]-dithiol. This is Peptide methionine sulfoxide reductase MsrB from Salmonella arizonae (strain ATCC BAA-731 / CDC346-86 / RSK2980).